We begin with the raw amino-acid sequence, 189 residues long: Calcyphosin (189 aa).

EF-hand domains are found at residues 21 to 56 (LGIQGLARFFRRLDRDRSRSLDSRELQRGLAELGLV), 57 to 92 (LDTAEAEGVCRRWDRDGSGTLDLEEFLRALRPPMSQ), 93 to 128 (AREAVIAAAFAKLDRSGDGVVTVDDLRGVYSGRTHP), and 136 to 172 (TEEEVLRRFLDNFDSSEKDGQVTLAEFQDYYSGVSAS). Ca(2+) contacts are provided by aspartate 34, aspartate 36, serine 38, serine 40, glutamate 45, aspartate 70, aspartate 72, serine 74, threonine 76, glutamate 81, aspartate 106, serine 108, aspartate 110, and aspartate 117. Serine 40 bears the Phosphoserine; by PKA mark.

In terms of assembly, monomer. Does not form oligomers in the presence of calcium. Phosphorylated in response to thyrotropin and cAMP. As to expression, detected in thyroid, salivary gland, lung, brain and cerebellum (at protein level).

The protein resides in the cytoplasm. Calcium-binding protein. May play a role in cellular signaling events (Potential). In Canis lupus familiaris (Dog), this protein is Calcyphosin (CAPS).